The sequence spans 400 residues: Enoyl-[acyl-carrier-protein] reductase [NADH] 2 (400 aa).

NAD(+) contacts are provided by residues 48–53 (GASSGF), 75–76 (FE), 112–113 (DA), and 141–142 (LA). Tyr-228 contacts substrate. Catalysis depends on Tyr-238, which acts as the Proton donor. NAD(+) is bound by residues Lys-247 and 276 to 278 (LVT).

The protein belongs to the TER reductase family. Monomer.

The enzyme catalyses a 2,3-saturated acyl-[ACP] + NAD(+) = a (2E)-enoyl-[ACP] + NADH + H(+). Its pathway is lipid metabolism; fatty acid biosynthesis. In terms of biological role, involved in the final reduction of the elongation cycle of fatty acid synthesis (FAS II). Catalyzes the reduction of a carbon-carbon double bond in an enoyl moiety that is covalently linked to an acyl carrier protein (ACP). This chain is Enoyl-[acyl-carrier-protein] reductase [NADH] 2, found in Vibrio vulnificus (strain YJ016).